We begin with the raw amino-acid sequence, 119 residues long: Protein TusC (119 aa).

It belongs to the DsrF/TusC family. In terms of assembly, heterohexamer, formed by a dimer of trimers. The hexameric TusBCD complex contains 2 copies each of TusB, TusC and TusD. The TusBCD complex interacts with TusE.

The protein localises to the cytoplasm. Functionally, part of a sulfur-relay system required for 2-thiolation of 5-methylaminomethyl-2-thiouridine (mnm(5)s(2)U) at tRNA wobble positions. The polypeptide is Protein TusC (Pectobacterium atrosepticum (strain SCRI 1043 / ATCC BAA-672) (Erwinia carotovora subsp. atroseptica)).